A 338-amino-acid chain; its full sequence is Glycerol-3-phosphate dehydrogenase [NAD(P)+] (338 aa).

Residues serine 13, tryptophan 14, and lysine 108 each coordinate NADPH. The sn-glycerol 3-phosphate site is built by lysine 108, glycine 139, and serine 141. NADPH is bound at residue alanine 143. Sn-glycerol 3-phosphate is bound by residues lysine 194, aspartate 247, serine 257, arginine 258, and asparagine 259. Lysine 194 acts as the Proton acceptor in catalysis. An NADPH-binding site is contributed by arginine 258. NADPH is bound by residues valine 282 and glutamate 284.

The protein belongs to the NAD-dependent glycerol-3-phosphate dehydrogenase family.

It is found in the cytoplasm. The catalysed reaction is sn-glycerol 3-phosphate + NAD(+) = dihydroxyacetone phosphate + NADH + H(+). It carries out the reaction sn-glycerol 3-phosphate + NADP(+) = dihydroxyacetone phosphate + NADPH + H(+). The protein operates within membrane lipid metabolism; glycerophospholipid metabolism. Functionally, catalyzes the reduction of the glycolytic intermediate dihydroxyacetone phosphate (DHAP) to sn-glycerol 3-phosphate (G3P), the key precursor for phospholipid synthesis. The sequence is that of Glycerol-3-phosphate dehydrogenase [NAD(P)+] from Streptococcus pneumoniae (strain P1031).